The primary structure comprises 307 residues: MATITAGMVKELRETTGVGMMDCKQALSENDGNMEAAIDWLRKKGLSKAAKKAGRVAAEGLIGALTDGKKGVVVEVNSETDFVARNEQFQGLVKMIAQVALKVGDDIDAINAAPVGSVTVATAIADAIATIGENMTLRRAKLLSVENGVVASYVHGAVVEGAGKLGVLVALESTGKTDELALLGRQIAMHVAAANPQALDAASLDPELIRREKDVMADKYRQQGKPEAMIEKIVENGLKTFYKEVCLLEQAFIHDTGKSVAQAVKEAEGKVGAPIKVAAFVRYALGEGIEKQTSDFAAEVAAVSGQK.

Residues 80–83 (TDFV) form an involved in Mg(2+) ion dislocation from EF-Tu region.

Belongs to the EF-Ts family.

The protein localises to the cytoplasm. Associates with the EF-Tu.GDP complex and induces the exchange of GDP to GTP. It remains bound to the aminoacyl-tRNA.EF-Tu.GTP complex up to the GTP hydrolysis stage on the ribosome. The protein is Elongation factor Ts of Rhodopseudomonas palustris (strain BisA53).